Reading from the N-terminus, the 834-residue chain is Probable phosphoenolpyruvate synthase (834 aa).

Residue histidine 447 is the Tele-phosphohistidine intermediate of the active site. Arginine 550, arginine 598, glutamate 699, glycine 720, serine 721, asparagine 722, and aspartate 723 together coordinate substrate. Glutamate 699 contacts Mg(2+). Aspartate 723 is a binding site for Mg(2+). Cysteine 772 acts as the Proton donor in catalysis.

Belongs to the PEP-utilizing enzyme family. Homooligomer. Forms a large complex of about 2000 kDa. Mg(2+) serves as cofactor. In terms of processing, the N-terminus is blocked.

The catalysed reaction is pyruvate + ATP + H2O = phosphoenolpyruvate + AMP + phosphate + 2 H(+). The protein operates within carbohydrate biosynthesis; gluconeogenesis. In terms of biological role, catalyzes the phosphorylation of pyruvate to phosphoenolpyruvate. This chain is Probable phosphoenolpyruvate synthase (ppsA), found in Staphylothermus marinus (strain ATCC 43588 / DSM 3639 / JCM 9404 / F1).